The following is a 1342-amino-acid chain: DNA-directed RNA polymerase subunit beta (1342 aa).

It belongs to the RNA polymerase beta chain family. As to quaternary structure, the RNAP catalytic core consists of 2 alpha, 1 beta, 1 beta' and 1 omega subunit. When a sigma factor is associated with the core the holoenzyme is formed, which can initiate transcription.

It catalyses the reaction RNA(n) + a ribonucleoside 5'-triphosphate = RNA(n+1) + diphosphate. Its function is as follows. DNA-dependent RNA polymerase catalyzes the transcription of DNA into RNA using the four ribonucleoside triphosphates as substrates. This Shewanella amazonensis (strain ATCC BAA-1098 / SB2B) protein is DNA-directed RNA polymerase subunit beta.